We begin with the raw amino-acid sequence, 141 residues long: Hemoglobin subunit alpha-D (141 aa).

The Globin domain occupies 1–141 (MLTEDEKQLI…VSAVLAEKYR (141 aa)). His58 and His87 together coordinate heme b.

This sequence belongs to the globin family. In terms of assembly, heterotetramer of two alpha-D chains and two beta chains. Red blood cells.

Involved in oxygen transport from the lung to the various peripheral tissues. The sequence is that of Hemoglobin subunit alpha-D (HBAD) from Chelonoidis carbonarius (Red-footed tortoise).